The chain runs to 91 residues: Putative regulatory protein Tlet_1629 (91 aa).

This sequence belongs to the RemA family.

The chain is Putative regulatory protein Tlet_1629 from Pseudothermotoga lettingae (strain ATCC BAA-301 / DSM 14385 / NBRC 107922 / TMO) (Thermotoga lettingae).